An 81-amino-acid chain; its full sequence is Protein GPR15LG (81 aa).

The signal sequence occupies residues 1-24 (MRFLALTSLLCILLLCLSFFSAEG). 2 cysteine pairs are disulfide-bonded: Cys40/Cys63 and Cys41/Cys60.

As to quaternary structure, interacts with SUSD2; the interaction is direct.

It localises to the secreted. Its function is as follows. Highly cationic protein that has multiple functions. Acts as a chemotactic factor that mediates lymphocytes recruitment to epithelia through binding and activation of the G-protein coupled receptor GPR15. May be a tumor suppressor; together with SUSD2 has a growth inhibitory effect on colon cancer cells which includes G1 cell cycle arrest. May regulate keratinocyte proliferation. In addition, through activation of Mas-related G protein-coupled receptors (MRGPRs) contributes to pruritogenesis by activating itch-selective sensory neurons and mast cells degranulation. Has antimicrobial activity against Gram-positive bacteria, including Staphylococcus aureus and Actinomyces spec., and Mycoplasma hominis and lentivirus. This Sus scrofa (Pig) protein is Protein GPR15LG (GPR15LG).